Consider the following 596-residue polypeptide: ATP-dependent lipid A-core flippase (596 aa).

6 consecutive transmembrane segments (helical) span residues 34 to 54 (VWVL…EAGI), 80 to 100 (AAVV…GYLL), 138 to 158 (AVVF…ITLV), 164 to 184 (VVFL…IVAI), 263 to 283 (QPLT…IAVV), and 292 to 312 (VGGF…LKHL). In terms of domain architecture, ABC transmembrane type-1 spans 38–321 (VAGVLAMAAV…LMDVNQPLQR (284 aa)). Positions 353–589 (IEFSHVSFSY…GGLYAHLHRI (237 aa)) constitute an ABC transporter domain. Position 389-396 (389-396 (GPSGSGKT)) interacts with ATP.

This sequence belongs to the ABC transporter superfamily. Lipid exporter (TC 3.A.1.106) family. Homodimer.

Its subcellular location is the cell inner membrane. It carries out the reaction ATP + H2O + lipid A-core oligosaccharideSide 1 = ADP + phosphate + lipid A-core oligosaccharideSide 2.. Involved in lipopolysaccharide (LPS) biosynthesis. Translocates lipid A-core from the inner to the outer leaflet of the inner membrane. Transmembrane domains (TMD) form a pore in the inner membrane and the ATP-binding domain (NBD) is responsible for energy generation. The sequence is that of ATP-dependent lipid A-core flippase from Burkholderia thailandensis (strain ATCC 700388 / DSM 13276 / CCUG 48851 / CIP 106301 / E264).